A 169-amino-acid chain; its full sequence is CKLF-like MARVEL transmembrane domain-containing protein 2A (169 aa).

Helical transmembrane passes span 40 to 60, 69 to 89, 98 to 118, and 136 to 156; these read FWLSGHAVFKLLSLGCMISAL, HPVLILLICMEAAICIFFIFL, IPFVFWPMADIFNSLFSCVFL, and YLTAMILMGAAAICSFIDMLL. In terms of domain architecture, MARVEL spans 40–162; it reads FWLSGHAVFK…DMLLQFQHFR (123 aa).

It belongs to the chemokine-like factor family.

It is found in the membrane. The chain is CKLF-like MARVEL transmembrane domain-containing protein 2A (Cmtm2a) from Mus musculus (Mouse).